Consider the following 2388-residue polypeptide: Hybrid signal transduction histidine kinase M (2388 aa).

8 disordered regions span residues 1 to 32, 42 to 61, 69 to 111, 123 to 209, 237 to 337, 361 to 421, 430 to 449, and 486 to 542; these read MSNY…NNFN, FNTP…NSIS, NECN…STPI, NRSN…NAYP, TLLN…SPKL, SPHG…YNDN, TRNT…SSSF, and IYTP…NNNE. The segment covering 69 to 82 has biased composition (polar residues); it reads NECNSGGEQSPKIK. 3 stretches are compositionally biased toward low complexity: residues 83 to 110, 125 to 206, and 242 to 288; these read TNNN…KSTP, SNLN…SNSN, and SSNN…NNGG. Residues 293-306 are compositionally biased toward polar residues; that stretch reads QFISSDNKYNTVGN. Basic residues predominate over residues 309–322; it reads HHHHHHQLHNHRHS. Composition is skewed to low complexity over residues 325-337, 361-399, 410-419, and 432-449; these read QGSS…SPKL, SPHG…NQNN, NNSNDSFDYN, and NTGY…SSSF. A compositionally biased stretch (pro residues) spans 489-505; the sequence is PPYPQPYPQPPQLPPPS. Residues 506 to 541 show a composition bias toward low complexity; it reads SSSSLSKENDNVDNNNTNNNNNNNNNNNNNNNNNNN. Transmembrane regions (helical) follow at residues 550-570, 589-609, 645-665, and 679-699; these read TMNL…FLMV, FILI…LLVV, YIFL…NLFF, and NIST…SHIP. A disordered region spans residues 732-888; sequence NNDNKNKIND…NNNEEDDEEE (157 aa). Positions 735-744 are enriched in basic and acidic residues; that stretch reads NKNKINDKSD. Low complexity predominate over residues 745-880; it reads NSNSITNNNN…NNNNNNNNNN (136 aa). The next 3 helical transmembrane spans lie at 896 to 916, 953 to 973, and 1025 to 1045; these read FQIF…LIVL, VQFQ…LLLV, and CSVG…WMSI. The 407-residue stretch at 1093-1499 folds into the Histidine kinase domain; the sequence is RLVQNTGSII…VFELQVPMKC (407 aa). The span at 1236-1257 shows a compositional bias: basic residues; sequence PIHHHRHHHRHHHHHHHHHHHH. The segment at 1236 to 1410 is disordered; that stretch reads PIHHHRHHHR…INNNINNNNN (175 aa). Positions 1260–1274 are enriched in acidic residues; it reads DDDDYDDDNDDDNNT. Over residues 1286-1315 the composition is skewed to basic and acidic residues; the sequence is LSDKIKDNQDENLELKKSNNDKIIENKENQ. Over residues 1316–1410 the composition is skewed to low complexity; the sequence is ENNNNNNNNN…INNNINNNNN (95 aa). In terms of domain architecture, Response regulatory 1 spans 1541–1656; it reads KILVIDDNPN…QLTVLSQLLP (116 aa). D1592 is modified (4-aspartylphosphate). Disordered stretches follow at residues 1666 to 1702, 1960 to 2022, 2036 to 2121, 2133 to 2183, and 2218 to 2256; these read SNQN…NIDF, GNNS…NSSN, CKGD…DIIN, QQQL…VKSS, and NQLN…NNND. The segment covering 1676–1696 has biased composition (gly residues); it reads SNGGGGGGGGGGGGGGGGGSG. Over residues 1974–1985 the composition is skewed to low complexity; sequence TNNNTTTTTTTT. The segment covering 1986 to 2010 has biased composition (polar residues); sequence QPKKSPILTSSNGSDKSEGSTGSNR. The segment covering 2054–2064 has biased composition (low complexity); the sequence is DSSSSSSSSDS. The span at 2065–2076 shows a compositional bias: basic and acidic residues; sequence HGQDDHSYRLED. Composition is skewed to low complexity over residues 2078–2109 and 2133–2165; these read SISS…SGIN and QQQL…LPIP. The span at 2169–2183 shows a compositional bias: polar residues; sequence INSSGASSGIKVKSS. Residues 2262 to 2383 enclose the Response regulatory 2 domain; it reads NILLVEDNLV…LLISLLKKLV (122 aa). 4-aspartylphosphate is present on D2313.

Activation probably requires transfer of a phosphate group between a histidine in the kinase core (transmitter) domain and an aspartate of the receiver domain.

The protein resides in the membrane. It carries out the reaction ATP + protein L-histidine = ADP + protein N-phospho-L-histidine.. In terms of biological role, acts as a receptor histidine kinase for a signal transduction pathway. This protein undergoes an ATP-dependent autophosphorylation at a conserved histidine residue in the kinase core, and a phosphoryl group is then transferred to a conserved aspartate residue in the receiver domain. The polypeptide is Hybrid signal transduction histidine kinase M (dhkM) (Dictyostelium discoideum (Social amoeba)).